The following is a 244-amino-acid chain: Phosphoadenosine 5'-phosphosulfate reductase (244 aa).

C239 serves as the catalytic Nucleophile; cysteine thiosulfonate intermediate.

Belongs to the PAPS reductase family. CysH subfamily.

The protein resides in the cytoplasm. The enzyme catalyses [thioredoxin]-disulfide + sulfite + adenosine 3',5'-bisphosphate + 2 H(+) = [thioredoxin]-dithiol + 3'-phosphoadenylyl sulfate. It participates in sulfur metabolism; hydrogen sulfide biosynthesis; sulfite from sulfate: step 3/3. Catalyzes the formation of sulfite from phosphoadenosine 5'-phosphosulfate (PAPS) using thioredoxin as an electron donor. The protein is Phosphoadenosine 5'-phosphosulfate reductase of Serratia proteamaculans (strain 568).